A 415-amino-acid chain; its full sequence is Serine hydroxymethyltransferase (415 aa).

(6S)-5,6,7,8-tetrahydrofolate is bound by residues Leu-117 and 121–123; that span reads GHL. The residue at position 226 (Lys-226) is an N6-(pyridoxal phosphate)lysine. (6S)-5,6,7,8-tetrahydrofolate-binding positions include Glu-241 and 349–351; that span reads SPF.

Belongs to the SHMT family. In terms of assembly, homodimer. The cofactor is pyridoxal 5'-phosphate.

The protein localises to the cytoplasm. It carries out the reaction (6R)-5,10-methylene-5,6,7,8-tetrahydrofolate + glycine + H2O = (6S)-5,6,7,8-tetrahydrofolate + L-serine. It participates in one-carbon metabolism; tetrahydrofolate interconversion. Its pathway is amino-acid biosynthesis; glycine biosynthesis; glycine from L-serine: step 1/1. Functionally, catalyzes the reversible interconversion of serine and glycine with tetrahydrofolate (THF) serving as the one-carbon carrier. This reaction serves as the major source of one-carbon groups required for the biosynthesis of purines, thymidylate, methionine, and other important biomolecules. Also exhibits THF-independent aldolase activity toward beta-hydroxyamino acids, producing glycine and aldehydes, via a retro-aldol mechanism. The protein is Serine hydroxymethyltransferase of Geobacter metallireducens (strain ATCC 53774 / DSM 7210 / GS-15).